Reading from the N-terminus, the 191-residue chain is Protein YceI (191 aa).

An N-terminal signal peptide occupies residues 1–22 (MKKNLLGFTLASLLFTTGSAVA).

The protein belongs to the UPF0312 family. Type 1 subfamily.

It localises to the periplasm. The chain is Protein YceI from Salmonella newport (strain SL254).